The primary structure comprises 1018 residues: Thrombospondin type-1 domain-containing protein 4 (1018 aa).

The first 26 residues, 1 to 26 (MVSYLTSCLSALSTLLLLLGSQLVCP), serve as a signal peptide directing secretion. Disordered stretches follow at residues 34-56 (KVPQ…SPGV), 116-240 (HRSQ…PSEA), and 534-623 (SPQV…NWKQ). The 254-residue stretch at 54–307 (PGVWGSWGPW…YKLCNTNACP (254 aa)) folds into the TSP type-1 1 domain. Over residues 187–199 (QRLRRQRPSSRHS) the composition is skewed to basic residues. A compositionally biased stretch (polar residues) spans 216–230 (HQFSHSQPLYQSDSG). 2 stretches are compositionally biased toward basic and acidic residues: residues 558–573 (QEDR…KEDS) and 592–603 (RHPERFPSHRPD). 5 TSP type-1 domains span residues 676-737 (CPAF…KICS), 739-792 (WQIR…DMGP), 793-851 (CAKS…GPCT), 852-911 (GKVE…HLKP), and 912-968 (CGAK…QDCV). A PLAC domain is found at 971–1008 (VDENCKDKYYNCNVVVQARLCVYNYYKTACCASCTRVA).

Isoform 2 interacts with FBN1. Isoform 2 may interact with TGFB1. Both isoforms are expressed in the embryo from 7 dpc through 17. Isoform 1 is widely expressed in adult tissues. Isoform 2 is detected in brain, spinal cord, eye, kidney, stomach and uterus. Mainly observed in fibrillar extracellular matrices in elastic tissues (at protein level).

The protein resides in the secreted. The protein localises to the extracellular space. Its subcellular location is the extracellular matrix. Its function is as follows. Promotes FBN1 matrix assembly. Attenuates TGFB signaling, possibly by accelerating the sequestration of large latent complexes of TGFB or active TGFB by FBN1 microfibril assembly, thereby negatively regulating the expression of TGFB regulatory targets, such as POSTN. The polypeptide is Thrombospondin type-1 domain-containing protein 4 (Thsd4) (Mus musculus (Mouse)).